The sequence spans 394 residues: Exodeoxyribonuclease 7 large subunit (394 aa).

It belongs to the XseA family. As to quaternary structure, heterooligomer composed of large and small subunits.

Its subcellular location is the cytoplasm. The enzyme catalyses Exonucleolytic cleavage in either 5'- to 3'- or 3'- to 5'-direction to yield nucleoside 5'-phosphates.. Functionally, bidirectionally degrades single-stranded DNA into large acid-insoluble oligonucleotides, which are then degraded further into small acid-soluble oligonucleotides. In Thermotoga petrophila (strain ATCC BAA-488 / DSM 13995 / JCM 10881 / RKU-1), this protein is Exodeoxyribonuclease 7 large subunit.